The primary structure comprises 296 residues: Glycine N-acyltransferase (296 aa).

Lys-16 is modified (N6-acetyllysine; alternate). Lys-16 carries the post-translational modification N6-succinyllysine; alternate. Lys-113 carries the N6-acetyllysine modification. Residues Lys-127 and Lys-142 each carry the N6-acetyllysine; alternate modification. Residues Lys-127 and Lys-142 each carry the N6-succinyllysine; alternate modification. N6-acetyllysine is present on Lys-159. Residue Lys-169 is modified to N6-succinyllysine. Lys-183 and Lys-256 each carry N6-acetyllysine; alternate. Residues Lys-183 and Lys-256 each carry the N6-succinyllysine; alternate modification. Lys-267 carries the N6-succinyllysine modification.

This sequence belongs to the glycine N-acyltransferase family.

The protein localises to the mitochondrion. The catalysed reaction is an acyl-CoA + glycine = an N-acylglycine + CoA + H(+). It carries out the reaction benzoyl-CoA + glycine = N-benzoylglycine + CoA + H(+). Its function is as follows. Mitochondrial acyltransferase which transfers an acyl group to the N-terminus of glycine and glutamine, although much less efficiently. Can conjugate a multitude of substrates to form a variety of N-acylglycines, thereby detoxify xenobiotics, such as benzoic acid or salicylic acid, and endogenous organic acids, such as isovaleric acid. This Rattus norvegicus (Rat) protein is Glycine N-acyltransferase (Glyat).